A 231-amino-acid polypeptide reads, in one-letter code: Ribonuclease 3 (231 aa).

Residues 5–134 (QKKLKNDYGL…FLGALFIDQG (130 aa)) enclose the RNase III domain. Glu47 serves as a coordination point for Mg(2+). Asp51 is an active-site residue. Mg(2+) is bound by residues Asn120 and Glu123. Glu123 is a catalytic residue. Residues 160–229 (DYKTELQEVL…AENAIKGQNH (70 aa)) form the DRBM domain.

The protein belongs to the ribonuclease III family. As to quaternary structure, homodimer. Mg(2+) is required as a cofactor.

Its subcellular location is the cytoplasm. It catalyses the reaction Endonucleolytic cleavage to 5'-phosphomonoester.. Digests double-stranded RNA. Involved in the processing of primary rRNA transcript to yield the immediate precursors to the large and small rRNAs (23S and 16S). Processes some mRNAs, and tRNAs when they are encoded in the rRNA operon. Processes pre-crRNA and tracrRNA of type II CRISPR loci if present in the organism. The polypeptide is Ribonuclease 3 (Lactococcus lactis subsp. lactis (strain IL1403) (Streptococcus lactis)).